Consider the following 629-residue polypeptide: tRNA uridine 5-carboxymethylaminomethyl modification enzyme MnmG (629 aa).

Residues 13–18, V125, and S180 each bind FAD; that span reads GGGHAG. 273–287 serves as a coordination point for NAD(+); it reads GPRYCPSIEDKVMRF. FAD is bound at residue Q370.

Belongs to the MnmG family. Homodimer. Heterotetramer of two MnmE and two MnmG subunits. FAD serves as cofactor.

It localises to the cytoplasm. In terms of biological role, NAD-binding protein involved in the addition of a carboxymethylaminomethyl (cmnm) group at the wobble position (U34) of certain tRNAs, forming tRNA-cmnm(5)s(2)U34. The protein is tRNA uridine 5-carboxymethylaminomethyl modification enzyme MnmG of Salmonella paratyphi C (strain RKS4594).